The sequence spans 504 residues: Ribonuclease Y (504 aa).

A helical transmembrane segment spans residues 2-22; that stretch reads TTSIVIGVVLVTVGLTFGWTI. A KH domain is found at 194–279; that stretch reads TVSTVNLPSE…EIVQKVTQEV (86 aa). In terms of domain architecture, HD spans 320–413; that stretch reads VLYHSKEVAL…VQVADAISAA (94 aa).

The protein belongs to the RNase Y family.

The protein localises to the cell membrane. Endoribonuclease that initiates mRNA decay. In Treponema pallidum (strain Nichols), this protein is Ribonuclease Y.